Reading from the N-terminus, the 618-residue chain is Medium-chain acyl-CoA ligase ACSF2, mitochondrial (618 aa).

The N-terminal 44 residues, methionine 1–phenylalanine 44, are a transit peptide targeting the mitochondrion. Lysine 182 carries the post-translational modification N6-acetyllysine. An N6-acetyllysine; alternate modification is found at lysine 185. Lysine 185 is modified (N6-succinyllysine; alternate). ATP is bound at residue threonine 266–lysine 274. An N6-acetyllysine mark is found at lysine 343 and lysine 401. Lysine 481 carries the post-translational modification N6-succinyllysine. ATP-binding residues include aspartate 496 and arginine 511. N6-acetyllysine is present on lysine 513. N6-acetyllysine; alternate occurs at positions 547 and 573. N6-succinyllysine; alternate occurs at positions 547 and 573. Lysine 602 is a binding site for ATP. Lysine 602 carries the post-translational modification N6-succinyllysine.

The protein belongs to the ATP-dependent AMP-binding enzyme family.

Its subcellular location is the mitochondrion. It carries out the reaction a medium-chain fatty acid + ATP + CoA = a medium-chain fatty acyl-CoA + AMP + diphosphate. It catalyses the reaction octanoate + ATP + CoA = octanoyl-CoA + AMP + diphosphate. Functionally, acyl-CoA synthases catalyze the initial reaction in fatty acid metabolism, by forming a thioester with CoA. Has some preference toward medium-chain substrates. Plays a role in adipocyte differentiation. This is Medium-chain acyl-CoA ligase ACSF2, mitochondrial from Macaca fascicularis (Crab-eating macaque).